The primary structure comprises 255 residues: tRNA (guanine-N(1)-)-methyltransferase (255 aa).

S-adenosyl-L-methionine-binding positions include Gly-117 and Ile-137–Leu-142.

This sequence belongs to the RNA methyltransferase TrmD family. In terms of assembly, homodimer.

Its subcellular location is the cytoplasm. The enzyme catalyses guanosine(37) in tRNA + S-adenosyl-L-methionine = N(1)-methylguanosine(37) in tRNA + S-adenosyl-L-homocysteine + H(+). In terms of biological role, specifically methylates guanosine-37 in various tRNAs. This is tRNA (guanine-N(1)-)-methyltransferase from Glaesserella parasuis serovar 5 (strain SH0165) (Haemophilus parasuis).